Here is a 176-residue protein sequence, read N- to C-terminus: Inorganic pyrophosphatase (176 aa).

Substrate contacts are provided by K30, R44, and Y56. 3 residues coordinate Mg(2+): D66, D71, and D103. Position 142 (Y142) interacts with substrate.

The protein belongs to the PPase family. As to quaternary structure, homohexamer. Mg(2+) serves as cofactor.

Its subcellular location is the cytoplasm. It catalyses the reaction diphosphate + H2O = 2 phosphate + H(+). Its function is as follows. Catalyzes the hydrolysis of inorganic pyrophosphate (PPi) forming two phosphate ions. The protein is Inorganic pyrophosphatase of Vibrio vulnificus (strain CMCP6).